The sequence spans 78 residues: Small ribosomal subunit protein bS18 (78 aa).

This sequence belongs to the bacterial ribosomal protein bS18 family. In terms of assembly, part of the 30S ribosomal subunit. Forms a tight heterodimer with protein bS6.

Functionally, binds as a heterodimer with protein bS6 to the central domain of the 16S rRNA, where it helps stabilize the platform of the 30S subunit. The polypeptide is Small ribosomal subunit protein bS18 (Geobacillus sp. (strain WCH70)).